Here is a 688-residue protein sequence, read N- to C-terminus: Potassium-transporting ATPase ATP-binding subunit (688 aa).

Transmembrane regions (helical) follow at residues 34–54 (PVMF…LAIL), 62–82 (ALFT…ANFA), 219–239 (VALT…TATL), and 260–280 (VLVA…LSAI). The 4-aspartylphosphate intermediate role is filled by aspartate 313. Residues aspartate 350, glutamate 354, 383–390 (FSAQTRMS), and lysine 401 contribute to the ATP site. 2 residues coordinate Mg(2+): aspartate 524 and aspartate 528. A run of 3 helical transmembrane segments spans residues 594–614 (FAII…LNVM), 622–642 (AILS…PLAL), and 667–687 (GLLV…ALIM).

The protein belongs to the cation transport ATPase (P-type) (TC 3.A.3) family. Type IA subfamily. The system is composed of three essential subunits: KdpA, KdpB and KdpC.

The protein localises to the cell inner membrane. It catalyses the reaction K(+)(out) + ATP + H2O = K(+)(in) + ADP + phosphate + H(+). Part of the high-affinity ATP-driven potassium transport (or Kdp) system, which catalyzes the hydrolysis of ATP coupled with the electrogenic transport of potassium into the cytoplasm. This subunit is responsible for energy coupling to the transport system and for the release of the potassium ions to the cytoplasm. The polypeptide is Potassium-transporting ATPase ATP-binding subunit (Yersinia enterocolitica serotype O:8 / biotype 1B (strain NCTC 13174 / 8081)).